We begin with the raw amino-acid sequence, 689 residues long: Glycine--tRNA ligase beta subunit (689 aa).

It belongs to the class-II aminoacyl-tRNA synthetase family. As to quaternary structure, tetramer of two alpha and two beta subunits.

The protein localises to the cytoplasm. The catalysed reaction is tRNA(Gly) + glycine + ATP = glycyl-tRNA(Gly) + AMP + diphosphate. This is Glycine--tRNA ligase beta subunit from Escherichia coli O17:K52:H18 (strain UMN026 / ExPEC).